The following is a 508-amino-acid chain: Cyclin-A1-1 (508 aa).

Residues 1-28 are compositionally biased toward low complexity; it reads MSSNLAASRRSSSSSSVAAAAAAKRPAV. 2 disordered regions span residues 1–40 and 82–125; these read MSSNLAASRRSSSSSSVAAAAAAKRPAVGEGGGGGGGKAA and VKKG…ESVL. The span at 29–39 shows a compositional bias: gly residues; it reads GEGGGGGGGKA. The span at 98-111 shows a compositional bias: low complexity; the sequence is ASAVKSASAKPAPA.

It belongs to the cyclin family. Cyclin AB subfamily. As to expression, expressed in the dividing region of the root cap and root apex. Expressed in the intercalary meristem of internodes and in adventitious roots under submergence conditions.

Involved in the control of the cell cycle at the G2/M (mitosis) transition. In Oryza sativa subsp. japonica (Rice), this protein is Cyclin-A1-1 (CYCA1-1).